Here is a 358-residue protein sequence, read N- to C-terminus: Hydroxyproline O-arabinosyltransferase 3 (358 aa).

A helical; Signal-anchor membrane pass occupies residues 8–28; the sequence is LLFLLGFGFFVVTYNLLTLIV.

In terms of tissue distribution, ubiquitous.

The protein resides in the golgi apparatus. It localises to the cis-Golgi network membrane. The catalysed reaction is trans-4-hydroxy-L-prolyl-[protein] + UDP-beta-L-arabinofuranose = O-(beta-L-arabinofuranosyl)-trans-4-hydroxy-L-prolyl-[protein] + UDP + H(+). Its function is as follows. Glycosyltransferase involved in the O-arabinosylation of several proteins including extensins and small signaling peptides. Catalyzes the transfer of the initial L-arabinose to the hydroxyl group of Hyp residues. Contributes redundantly with HPAT1 and HPAT2 to arabinosylation of EXT3, but main contributor to arabinosylation of CLE peptides. In Arabidopsis thaliana (Mouse-ear cress), this protein is Hydroxyproline O-arabinosyltransferase 3.